A 352-amino-acid polypeptide reads, in one-letter code: MARTMTMRVSSLLVAVVLLAALSFQACSGHGGINDGDGQVDAPATPASSSGVRSKGLIAVKVWCLVILLVFTFAGGVSPYFYRWNESFLLLGTQFAAGVFLGTALMHFLADSTSTFKGLTTNQYPFSFMLTCVGFLLTMLSDLVIAAVARRSAAAGVSDNQVSEQQQRQQAEGAVMSRKEEEAAAVAHPAMLVRTSSFEDAVLLIVALCFHSVFEGIAIGVSASKSEAWRNLWTIGLHKIFAAVAMGIALLRMIPKRPFLMTVVYSLAFAVSSPVGVGIGIAIDATSQGRAADWTYAISMGLATGVFIYVAINHLIAKGYRPHHPTAADKPLFKFLAVLLGVAVMAVVMIWD.

Residues 1–29 form the signal peptide; the sequence is MARTMTMRVSSLLVAVVLLAALSFQACSG. Residues 30-56 are Extracellular-facing; the sequence is HGGINDGDGQVDAPATPASSSGVRSKG. The helical transmembrane segment at 57–77 threads the bilayer; it reads LIAVKVWCLVILLVFTFAGGV. Topologically, residues 78 to 87 are cytoplasmic; sequence SPYFYRWNES. A helical transmembrane segment spans residues 88 to 108; the sequence is FLLLGTQFAAGVFLGTALMHF. The Extracellular segment spans residues 109-127; the sequence is LADSTSTFKGLTTNQYPFS. Residues 128 to 148 traverse the membrane as a helical segment; the sequence is FMLTCVGFLLTMLSDLVIAAV. Topologically, residues 149–200 are cytoplasmic; it reads ARRSAAAGVSDNQVSEQQQRQQAEGAVMSRKEEEAAAVAHPAMLVRTSSFED. The helical transmembrane segment at 201–221 threads the bilayer; the sequence is AVLLIVALCFHSVFEGIAIGV. Topologically, residues 222-230 are extracellular; the sequence is SASKSEAWR. A helical transmembrane segment spans residues 231 to 251; the sequence is NLWTIGLHKIFAAVAMGIALL. Residues 252-262 lie on the Cytoplasmic side of the membrane; the sequence is RMIPKRPFLMT. The helical transmembrane segment at 263 to 283 threads the bilayer; that stretch reads VVYSLAFAVSSPVGVGIGIAI. Residues 284-296 are Extracellular-facing; it reads DATSQGRAADWTY. A helical membrane pass occupies residues 297 to 317; that stretch reads AISMGLATGVFIYVAINHLIA. The Cytoplasmic segment spans residues 318 to 330; that stretch reads KGYRPHHPTAADK. A helical membrane pass occupies residues 331-351; the sequence is PLFKFLAVLLGVAVMAVVMIW. A topological domain (extracellular) is located at residue aspartate 352.

Belongs to the ZIP transporter (TC 2.A.5) family. Expressed in vascular bundles of roots and leaves.

Its subcellular location is the cell membrane. Its function is as follows. Zinc transporter that may mediate zinc uptake from the rhizosphere. May also transport other divalent cations. The polypeptide is Zinc transporter 1 (ZIP1) (Oryza sativa subsp. japonica (Rice)).